The primary structure comprises 172 residues: Cystatin-like cysteine protease inhibitor EPIC4 (172 aa).

The signal sequence occupies residues 1–17; sequence MRASLSILVAFPALAAA. The Secondary area of contact motif lies at 71–75; sequence QVVAG. The tract at residues 129–172 is disordered; the sequence is EAATASSSSTPAPTPASTSTSASSSEETMLQSSVQQRAMFSDFV. Positions 130-156 are enriched in low complexity; that stretch reads AATASSSSTPAPTPASTSTSASSSEET. Polar residues predominate over residues 157–166; it reads MLQSSVQQRA.

It belongs to the cystatin family.

It localises to the secreted. Secreted effector that interacts with and inhibits host apoplastic pathogenesis-related papain-like cysteine proteases. Inhibition of host proteases by a pathogen extracellular protease inhibitor forms a specific type of defense-counterdefense mechanism between plants and microbial pathogens. The protein is Cystatin-like cysteine protease inhibitor EPIC4 of Phytophthora infestans (Potato late blight agent).